Reading from the N-terminus, the 2472-residue chain is Nuclear receptor corepressor 2 (2472 aa).

Disordered stretches follow at residues methionine 1–proline 20, arginine 47–serine 168, and isoleucine 190–glutamate 220. Arginine 18 carries the asymmetric dimethylarginine modification. The segment covering serine 51 to glutamine 60 has biased composition (polar residues). Phosphoserine occurs at positions 54 and 67. Basic and acidic residues-rich tracts occupy residues arginine 78 to serine 88 and glycine 96 to leucine 112. Phosphoserine is present on residues serine 149 and serine 152. A coiled-coil region spans residues serine 165–proline 207. The segment covering glutamate 203–lysine 212 has biased composition (basic and acidic residues). A Phosphoserine modification is found at serine 215. The segment at leucine 254–lysine 312 is interaction with SIN3A/B. The tract at residues methionine 389 to lysine 480 is deacetylase activation domain (DAD). Residues glutamine 427–asparagine 478 form the SANT 1 domain. The 1D-myo-inositol 1,4,5,6-tetrakisphosphate site is built by lysine 449, tyrosine 470, and tyrosine 471. Disordered stretches follow at residues tyrosine 487 to threonine 618, histidine 665 to isoleucine 1107, and serine 1173 to serine 1197. A coiled-coil region spans residues lysine 492–valine 560. A Phosphoserine modification is found at serine 493. Low complexity predominate over residues glutamine 494–glutamine 507. Positions serine 512–aspartate 548 are enriched in basic and acidic residues. Position 549 is a phosphothreonine (threonine 549). Serine 550 is modified (phosphoserine). Residues alanine 592–serine 609 show a composition bias toward polar residues. Positions asparagine 606–asparagine 657 constitute an SANT 2 domain. A coiled-coil region spans residues leucine 658–threonine 682. Positions asparagine 709–glutamate 718 are enriched in acidic residues. A compositionally biased stretch (polar residues) spans valine 739–serine 750. A phosphoserine mark is found at serine 747 and serine 750. 2 stretches are compositionally biased toward pro residues: residues threonine 773–glutamate 782 and glutamate 789–proline 811. 2 stretches are compositionally biased toward basic and acidic residues: residues glutamate 831–glutamate 850 and glutamate 859–glutamate 868. Lysine 878 carries the N6-acetyllysine modification. Residues glycine 905–threonine 919 show a composition bias toward low complexity. Serine 938 is subject to Phosphoserine. Threonine 945 bears the Phosphothreonine mark. Serine 955 bears the Phosphoserine mark. Lysine 958 carries the N6-acetyllysine modification. The span at lysine 978–valine 988 shows a compositional bias: basic and acidic residues. The span at proline 989–threonine 1000 shows a compositional bias: pro residues. Low complexity predominate over residues leucine 1090–valine 1101. 2 positions are modified to N6-acetyllysine: lysine 1181 and lysine 1209. Residue serine 1220 is modified to Phosphoserine. 3 disordered regions span residues serine 1254–lysine 1277, leucine 1345–lysine 1378, and proline 1410–valine 1443. Position 1350 is a phosphothreonine (threonine 1350). Residues aspartate 1359 to proline 1368 show a composition bias toward basic and acidic residues. Phosphoserine occurs at positions 1449, 1509, and 1565. The tract at residues lysine 1479–isoleucine 1578 is disordered. Arginine 1624 carries the post-translational modification Asymmetric dimethylarginine. The disordered stretch occupies residues threonine 1734–leucine 1826. Low complexity predominate over residues serine 1740–proline 1753. Residues serine 1746 and serine 1749 each carry the phosphoserine modification. Basic and acidic residues predominate over residues serine 1765–serine 1778. Positions arginine 1807–leucine 1826 are enriched in polar residues. At serine 1819 the chain carries Phosphoserine. Residue arginine 1854 is modified to Omega-N-methylarginine. Disordered regions lie at residues arginine 1857–proline 1878, lysine 1898–serine 1986, and alanine 2001–alanine 2078. The segment covering glutamate 1899–alanine 1913 has biased composition (basic and acidic residues). An N6-acetyllysine modification is found at lysine 1920. Positions glutamate 1925–serine 1938 are enriched in low complexity. Serine 1963 bears the Phosphoserine mark. Lysine 1983 is subject to N6-acetyllysine. Phosphoserine is present on residues serine 2004, serine 2012, serine 2015, serine 2016, and serine 2018. Threonine 2020 bears the Phosphothreonine mark. The segment covering threonine 2020–histidine 2043 has biased composition (basic and acidic residues). Position 2035 is a phosphoserine (serine 2035). Residues leucine 2064–leucine 2075 are compositionally biased toward low complexity. The interval arginine 2086–leucine 2090 is required for interaction with RARA in the absence of its ligand. Residues isoleucine 2094–isoleucine 2098 carry the CORNR box of ID1 motif. Positions arginine 2132–phenylalanine 2226 are disordered. Residues serine 2161, serine 2181, and serine 2215 each carry the phosphoserine modification. The CORNR box of ID2 motif lies at leucine 2296–isoleucine 2300. Residues glycine 2343 to proline 2459 form a disordered region. A Phosphoserine modification is found at serine 2371. Residues leucine 2439 to histidine 2450 show a composition bias toward low complexity.

This sequence belongs to the N-CoR nuclear receptor corepressors family. In terms of assembly, forms a large corepressor complex that contains SIN3A/B and histone deacetylases HDAC1 and HDAC2. This complex associates with the thyroid (TR) and the retinoid acid receptors (RAR) in the absence of ligand, and may stabilize their interaction with TFIIB. Interacts directly with RARA in the absence of ligand; the interaction represses RARA activity. Interacts (isoform SMRT) with HDAC10. Interacts with MINT. Component of the N-Cor repressor complex, at least composed of NCOR1, NCOR2, HDAC3, TBL1X, TBL1R, CORO2A and GPS2. Interacts with CBFA2T3 and ATXN1L. Interacts with RARB; the interaction is weak and does not repress RARB transactivational activity. Interacts (via 1D-myo-inositol 1,4,5,6-tetrakisphosphate) with HDAC3; promoting the histone deacetylase activity of HDAC3. Interacts with HDAC7 and C1D. Interacts with NR4A2; this interaction increases in the absence of PITX3. Interacts with BCL6 (via the BTB domain), required for BCL6 transcriptional repressor activity on a subset of target genes. Forms ternary complexes with BCOR and BCL6 on target gene promoters but, on enhancer elements, interacts with BCL6 and HDAC3 to repress proximal gene expression. May interact with DEAF1. Interacts with RXRA. Interacts with MECP2. Interacts with ZBTB7A. Interacts with AR. Interacts with TBL1Y. Interacts with SANBR (via the BTB domain). As to expression, ubiquitous. Also widely expressed in early embryos.

Its subcellular location is the nucleus. Transcriptional corepressor that mediates the transcriptional repression activity of some nuclear receptors by promoting chromatin condensation, thus preventing access of the basal transcription. Acts by recruiting chromatin modifiers, such as histone deacetylases HDAC1, HDAC2 and HDAC3. Required to activate the histone deacetylase activity of HDAC3. Involved in the regulation BCL6-dependent of the germinal center (GC) reactions, mainly through the control of the GC B-cells proliferation and survival. Recruited by ZBTB7A to the androgen response elements/ARE on target genes, negatively regulates androgen receptor signaling and androgen-induced cell proliferation. The polypeptide is Nuclear receptor corepressor 2 (Ncor2) (Mus musculus (Mouse)).